A 177-amino-acid chain; its full sequence is Large ribosomal subunit protein uL6 (177 aa).

The protein belongs to the universal ribosomal protein uL6 family. In terms of assembly, part of the 50S ribosomal subunit.

This protein binds to the 23S rRNA, and is important in its secondary structure. It is located near the subunit interface in the base of the L7/L12 stalk, and near the tRNA binding site of the peptidyltransferase center. This is Large ribosomal subunit protein uL6 from Klebsiella pneumoniae (strain 342).